Here is a 231-residue protein sequence, read N- to C-terminus: MYSSNSEIKKKVTFILAAAGQGKRMNLNSPKQFLDYRGEPLFYSSLKLAFENKNINDIIIITNKENLNFMVKYCQNKNLFSKVKYIVEGGSERQYSIYNAIKKIKDTDIVIIQDAARPFLKDKYIEESLKILNDDCDGAIIGVKCKDTIKIIDENGIVLETPNRDNLIMVHTPQTFKFEILKKAHQMAEEKNILATDDASLVEMISGKIKIIYGDYDNIKITVQEDLKFLK.

The protein belongs to the IspD/TarI cytidylyltransferase family. IspD subfamily.

It carries out the reaction 2-C-methyl-D-erythritol 4-phosphate + CTP + H(+) = 4-CDP-2-C-methyl-D-erythritol + diphosphate. It functions in the pathway isoprenoid biosynthesis; isopentenyl diphosphate biosynthesis via DXP pathway; isopentenyl diphosphate from 1-deoxy-D-xylulose 5-phosphate: step 2/6. Its function is as follows. Catalyzes the formation of 4-diphosphocytidyl-2-C-methyl-D-erythritol from CTP and 2-C-methyl-D-erythritol 4-phosphate (MEP). This is 2-C-methyl-D-erythritol 4-phosphate cytidylyltransferase from Fusobacterium nucleatum subsp. nucleatum (strain ATCC 25586 / DSM 15643 / BCRC 10681 / CIP 101130 / JCM 8532 / KCTC 2640 / LMG 13131 / VPI 4355).